Consider the following 563-residue polypeptide: MSEITLGKYLFERLKQVNVNTVFGLPGDFNLSLLDKIYEVEGMRWAGNANELNAAYAADGYARIKGMSCIITTFGVGELSALNGIAGSYAEHVGVLHVVGVPSISAQAKQLLLHHTLGNGDFTVFHRMSANISETTAMITDIATAPAEIDRCIRTTYVTQRPVYLGLPANLVDLNVPAKLLQTPIDMSLKPNDAESEKEVIDTILALVKDAKNPVILADACCSRHDVKAETKKLIDLTQFPAFVTPMGKGSIDEQHPRYGGVYVGTLSKPEVKEAVESADLILSVGALLSDFNTGSFSYSYKTKNIVEFHSDHMKIRNATFPGVQMKFVLQKLLTTIADAAKGYKPVAVPARTPANAAVPASTPLKQEWMWNQLGNFLQEGDVVIAETGTSAFGINQTTFPNNTYGISQVLWGSIGFTTGATLGAAFAAEEIDPKKRVILFIGDGSLQLTVQEISTMIRWGLKPYLFVLNNDGYTIEKLIHGPKAQYNEIQGWDHLSLLPTFGAKDYETHRVATTGEWDKLTQDKSFNDNSKIRMIEIMLPVFDAPQNLVEQAKLTAATNAKQ.

Ser-2 is modified (N-acetylserine). The pyruvate site is built by Asp-28, His-115, and Tyr-157. At Arg-161 the chain carries Omega-N-methylarginine. A Glycyl lysine isopeptide (Lys-Gly) (interchain with G-Cter in ubiquitin) cross-link involves residue Lys-212. At Ser-223 the chain carries Phosphoserine. Residue Arg-224 coordinates pyruvate. Lys-233 participates in a covalent cross-link: Glycyl lysine isopeptide (Lys-Gly) (interchain with G-Cter in ubiquitin). At Thr-266 the chain carries Phosphothreonine. Residues Lys-269 and Lys-332 each participate in a glycyl lysine isopeptide (Lys-Gly) (interchain with G-Cter in ubiquitin) cross-link. 2 positions are modified to phosphothreonine: Thr-336 and Thr-353. Thiamine diphosphate is bound by residues Thr-390 and 413 to 415; that span reads GSI. Asp-444 is a Mg(2+) binding site. Thiamine diphosphate-binding positions include 445–446 and 471–476; these read GS and NDGYTI. Mg(2+) contacts are provided by Asn-471 and Gly-473. Glu-477 is a binding site for pyruvate. Glycyl lysine isopeptide (Lys-Gly) (interchain with G-Cter in ubiquitin) cross-links involve residues Lys-484, Lys-505, and Lys-520. A Phosphothreonine modification is found at Thr-522. Phosphoserine is present on Ser-526.

Belongs to the TPP enzyme family. As to quaternary structure, homotetramer. Mg(2+) is required as a cofactor. Requires thiamine diphosphate as cofactor. Cleavage of N-terminal methionine and N-terminal acetylation by NAT1/ARD1.

The protein resides in the cytoplasm. It is found in the nucleus. It catalyses the reaction pyruvate + H(+) = acetaldehyde + CO2. The catalysed reaction is 3-methyl-2-oxobutanoate + H(+) = 2-methylpropanal + CO2. The enzyme catalyses (S)-3-methyl-2-oxopentanoate + H(+) = 2-methylbutanal + CO2. It carries out the reaction indole-3-pyruvate + H(+) = indole-3-acetaldehyde + CO2. It catalyses the reaction 3-phenylpyruvate + H(+) = 2-phenylacetaldehyde + CO2. The catalysed reaction is 2-oxobutanoate + H(+) = propanal + CO2. The enzyme catalyses 2-oxopentanoate + H(+) = butanal + CO2. It carries out the reaction 2 acetaldehyde = acetoin. It catalyses the reaction acetaldehyde + pyruvate + H(+) = acetoin + CO2. It participates in fermentation; ethanol fermentation. Its pathway is amino-acid degradation; Ehrlich pathway. With respect to regulation, allosterically activated by its substrate, pyruvate. Major of three pyruvate decarboxylases (PDC1, PDC5, PDC6) implicated in the nonoxidative conversion of pyruvate to acetaldehyde and carbon dioxide during alcoholic fermentation. Most of the produced acetaldehyde is subsequently reduced to ethanol, but some is required for cytosolic acetyl-CoA production for biosynthetic pathways. The enzyme is also one of five 2-oxo acid decarboxylases (PDC1, PDC5, PDC6, ARO10, and THI3) able to decarboxylate more complex 2-oxo acids (alpha-ketoacids) than pyruvate, which seem mainly involved in amino acid catabolism. Here the enzyme catalyzes the decarboxylation of amino acids, which, in a first step, have been transaminated to the corresponding 2-oxo acids. In a third step, the resulting aldehydes are reduced to alcohols, collectively referred to as fusel oils or alcohols. Its preferred substrates are the transaminated amino acids derived from threonine (2-oxobutanoate), norvaline (2-oxopentanoate), valine (3-methyl-2-oxobutanoate, also alpha-keto-isovalerate), isoleucine ((3S)-3-methyl-2-oxopentanoate, also alpha-keto-beta-methylvalerate), phenylalanine (phenylpyruvate), and tryptophan (3-(indol-3-yl)pyruvate), whereas transaminated leucine is no substrate. In a side-reaction the carbanionic intermediate (or active aldehyde) generated by decarboxylation or by activation of an aldehyde can react with an aldehyde via condensation (or carboligation) yielding a 2-hydroxy ketone, collectively called acyloins. In Saccharomyces cerevisiae (strain ATCC 204508 / S288c) (Baker's yeast), this protein is Pyruvate decarboxylase isozyme 1.